A 120-amino-acid polypeptide reads, in one-letter code: NAD(P)H-quinone oxidoreductase subunit 3, chloroplastic (120 aa).

3 consecutive transmembrane segments (helical) span residues 9 to 29, 64 to 84, and 88 to 108; these read IFWT…LISG, MFAL…PWAM, and VLGV…IVGS.

This sequence belongs to the complex I subunit 3 family. In terms of assembly, NDH is composed of at least 16 different subunits, 5 of which are encoded in the nucleus.

Its subcellular location is the plastid. The protein localises to the chloroplast thylakoid membrane. The enzyme catalyses a plastoquinone + NADH + (n+1) H(+)(in) = a plastoquinol + NAD(+) + n H(+)(out). It catalyses the reaction a plastoquinone + NADPH + (n+1) H(+)(in) = a plastoquinol + NADP(+) + n H(+)(out). NDH shuttles electrons from NAD(P)H:plastoquinone, via FMN and iron-sulfur (Fe-S) centers, to quinones in the photosynthetic chain and possibly in a chloroplast respiratory chain. The immediate electron acceptor for the enzyme in this species is believed to be plastoquinone. Couples the redox reaction to proton translocation, and thus conserves the redox energy in a proton gradient. In Piper cenocladum (Ant piper), this protein is NAD(P)H-quinone oxidoreductase subunit 3, chloroplastic.